An 82-amino-acid polypeptide reads, in one-letter code: MSRKRPQPPVKPFKKKPNPLKAAKVTEIDYKDVALLRKFISDRGKIRSRRITGVTVQEQRELSKAIKNAREMALLPYATSGR.

The protein belongs to the bacterial ribosomal protein bS18 family. Part of the 30S ribosomal subunit. Forms a tight heterodimer with protein bS6.

Functionally, binds as a heterodimer with protein bS6 to the central domain of the 16S rRNA, where it helps stabilize the platform of the 30S subunit. The protein is Small ribosomal subunit protein bS18 of Bifidobacterium longum (strain NCC 2705).